The chain runs to 685 residues: Translation initiation factor IF-2 (685 aa).

The segment at 60–79 (ISLAKTREPSKEKTEAKKPP) is disordered. Basic and acidic residues predominate over residues 64–79 (KTREPSKEKTEAKKPP). Residues 175 to 352 (NRPPVVTVMG…DIRCIPDSPV (178 aa)) form the tr-type G domain. The interval 184-191 (GHVDHGKT) is G1. A GTP-binding site is contributed by 184-191 (GHVDHGKT). The interval 209-213 (GITQS) is G2. The interval 230–233 (DTPG) is G3. GTP-binding positions include 230–234 (DTPGH) and 284–287 (NKID). The G4 stretch occupies residues 284–287 (NKID). The interval 321–323 (SAR) is G5.

This sequence belongs to the TRAFAC class translation factor GTPase superfamily. Classic translation factor GTPase family. IF-2 subfamily.

It is found in the cytoplasm. In terms of biological role, one of the essential components for the initiation of protein synthesis. Protects formylmethionyl-tRNA from spontaneous hydrolysis and promotes its binding to the 30S ribosomal subunits. Also involved in the hydrolysis of GTP during the formation of the 70S ribosomal complex. The protein is Translation initiation factor IF-2 of Fervidobacterium nodosum (strain ATCC 35602 / DSM 5306 / Rt17-B1).